Reading from the N-terminus, the 301-residue chain is uncharacterized protein (301 aa).

Residues 16-28 (EITEESEKTKTDL) show a composition bias toward basic and acidic residues. Positions 16–38 (EITEESEKTKTDLQKANTPNKTE) are disordered. A compositionally biased stretch (polar residues) spans 29 to 38 (QKANTPNKTE). The 50-residue stretch at 252–301 (KENVALKMLQRCGWKEGQGLGQHNQGIINPLHVEISGFVTETKHSKINDK) folds into the G-patch domain.

This is an uncharacterized protein from Schizosaccharomyces pombe (strain 972 / ATCC 24843) (Fission yeast).